The following is a 552-amino-acid chain: WAP, Kazal, immunoglobulin, Kunitz and NTR domain-containing protein 1 (552 aa).

The signal sequence occupies residues 1–25 (MPAPQPFLPLLFVFVLIHLTSETNL). Residues 29 to 82 (PGSHPGMCPNELSPHLWVDAQSTCERECTGDQDCAASEKCCTNVCGLQSCVAAR) enclose the WAP domain. 17 cysteine pairs are disulfide-bonded: cysteine 36–cysteine 69, cysteine 52–cysteine 73, cysteine 56–cysteine 68, cysteine 62–cysteine 78, cysteine 120–cysteine 150, cysteine 124–cysteine 143, cysteine 132–cysteine 161, cysteine 211–cysteine 267, cysteine 303–cysteine 355, cysteine 310–cysteine 338, cysteine 330–cysteine 351, cysteine 363–cysteine 413, cysteine 372–cysteine 396, cysteine 388–cysteine 409, cysteine 421–cysteine 493, cysteine 424–cysteine 495, and cysteine 435–cysteine 544. The region spanning 112–163 (WDGQPVCRCRDRCEKEPSFTCASDGLTYYNRCYMDAEACLRGLHLHVVPCKH) is the Kazal-like domain. One can recognise an Ig-like C2-type domain in the interval 190–283 (PALYNSPSPQ…GLLRADFPLS (94 aa)). BPTI/Kunitz inhibitor domains lie at 289–355 (TTQD…QQAC) and 363–413 (CALP…EDAC). Residues 413 to 544 (CPVPRTPPCR…IVELLEKKAC (132 aa)) enclose the NTR domain. Asparagine 497 carries N-linked (GlcNAc...) asparagine glycosylation.

The protein belongs to the WFIKKN family.

The protein localises to the secreted. Protease-inhibitor that contains multiple distinct protease inhibitor domains. Probably has serine protease- and metalloprotease-inhibitor activity. This chain is WAP, Kazal, immunoglobulin, Kunitz and NTR domain-containing protein 1 (Wfikkn1), found in Mus musculus (Mouse).